The primary structure comprises 558 residues: Leucine-rich repeat-containing protein 71 (558 aa).

The segment covering 1-18 has biased composition (low complexity); sequence MSSEPSTTGTSPRTPRPG. 2 disordered regions span residues 1–55 and 86–112; these read MSSE…NPEE and RVQQ…SASC. Positions 28–38 are enriched in basic and acidic residues; sequence KKGDRAAKDKT. Positions 86–99 are enriched in polar residues; it reads RVQQSSVPSASTSE. 4 LRR repeats span residues 196 to 216, 221 to 241, 253 to 274, and 281 to 302; these read TLRK…SKLM, TIVH…QLLG, TLVS…YIAD, and SLLW…KLAE. The interval 325–415 is disordered; that stretch reads GTQERSRSPS…DAAKAGKGKV (91 aa). Basic and acidic residues-rich tracts occupy residues 339–348 and 380–391; these read GDSKAEREKS and KTGEVVKKEEKL.

In Mus musculus (Mouse), this protein is Leucine-rich repeat-containing protein 71 (Lrrc71).